A 348-amino-acid polypeptide reads, in one-letter code: GMP reductase (348 aa).

108–131 (ADFQKTKDIMALSDELIFICVDIA) is a binding site for NADP(+). Residues glycine 181 and glycine 183 each coordinate K(+). The active-site Thioimidate intermediate is the cysteine 186. Position 216 to 239 (216 to 239 (IIGDGGCSCAGDVSKAFGGGADFV)) interacts with NADP(+).

Belongs to the IMPDH/GMPR family. GuaC type 1 subfamily. As to quaternary structure, homotetramer.

The enzyme catalyses IMP + NH4(+) + NADP(+) = GMP + NADPH + 2 H(+). Its function is as follows. Catalyzes the irreversible NADPH-dependent deamination of GMP to IMP. It functions in the conversion of nucleobase, nucleoside and nucleotide derivatives of G to A nucleotides, and in maintaining the intracellular balance of A and G nucleotides. This Vibrio parahaemolyticus serotype O3:K6 (strain RIMD 2210633) protein is GMP reductase.